Consider the following 122-residue polypeptide: Large ribosomal subunit protein uL14 (122 aa).

This sequence belongs to the universal ribosomal protein uL14 family. As to quaternary structure, part of the 50S ribosomal subunit. Forms a cluster with proteins L3 and L19. In the 70S ribosome, L14 and L19 interact and together make contacts with the 16S rRNA in bridges B5 and B8.

Its function is as follows. Binds to 23S rRNA. Forms part of two intersubunit bridges in the 70S ribosome. The polypeptide is Large ribosomal subunit protein uL14 (Psychrobacter sp. (strain PRwf-1)).